The sequence spans 311 residues: Aspartate carbamoyltransferase catalytic subunit (311 aa).

Residues Arg55 and Thr56 each contribute to the carbamoyl phosphate site. Lys85 contributes to the L-aspartate binding site. Residues Arg106, His135, and Gln138 each contribute to the carbamoyl phosphate site. Arg168 and Arg230 together coordinate L-aspartate. The carbamoyl phosphate site is built by Leu268 and Pro269.

It belongs to the aspartate/ornithine carbamoyltransferase superfamily. ATCase family. Heterododecamer (2C3:3R2) of six catalytic PyrB chains organized as two trimers (C3), and six regulatory PyrI chains organized as three dimers (R2).

The enzyme catalyses carbamoyl phosphate + L-aspartate = N-carbamoyl-L-aspartate + phosphate + H(+). It functions in the pathway pyrimidine metabolism; UMP biosynthesis via de novo pathway; (S)-dihydroorotate from bicarbonate: step 2/3. In terms of biological role, catalyzes the condensation of carbamoyl phosphate and aspartate to form carbamoyl aspartate and inorganic phosphate, the committed step in the de novo pyrimidine nucleotide biosynthesis pathway. The sequence is that of Aspartate carbamoyltransferase catalytic subunit from Salmonella arizonae (strain ATCC BAA-731 / CDC346-86 / RSK2980).